Consider the following 294-residue polypeptide: MGWSLRMWIVSILVLTQLVNGALCWGDAGHYAVCKIAQSYFEEDTVVAVKKLLPESANGELAAVCSWPDEIKKLPQWRWTSALHFADTPDYKCNYEYSRDCPKDWCVTGAIFNYTNQLMSTSENSQSIVHYNLTEALMFLSHYMGDIHQPLHEGFIGDLGGNKIKVHWYNQETNLHRVWDDMIIESALETYYNSSLPRMIHELQAKLKNGWSNDVPSWESCQLNQTACPNPYASESIDLACKYAYRNATAGTTLGDYYFVSRLPVVEKRLAQGGIRLAGTLNRIFSAKRKLARA.

A signal peptide spans 1–24; the sequence is MGWSLRMWIVSILVLTQLVNGALC. Residues tryptophan 25 and histidine 30 each coordinate a divalent metal cation. 25–30 serves as a coordination point for substrate; it reads WGDAGH. Cysteine 34 and cysteine 65 are disulfide-bonded. Aspartate 69 and histidine 84 together coordinate a divalent metal cation. Substrate contacts are provided by residues 69 to 75, 84 to 87, and 94 to 99; these read DEIKKLP, HFAD, and NYEYSR. Disulfide bonds link cysteine 93/cysteine 241, cysteine 101/cysteine 106, and cysteine 221/cysteine 228. Residues asparagine 113 and tyrosine 131 each contribute to the substrate site. Asparagine 113 carries N-linked (GlcNAc...) asparagine glycosylation. Asparagine 132 is a glycosylation site (N-linked (GlcNAc...) asparagine). A divalent metal cation is bound by residues histidine 142, aspartate 146, histidine 152, histidine 176, and aspartate 180. The interval 142-191 is substrate binding; that stretch reads HYMGDIHQPLHEGFIGDLGGNKIKVHWYNQETNLHRVWDDMIIESALETY. Asparagine 193, asparagine 224, and asparagine 247 each carry an N-linked (GlcNAc...) asparagine glycan. Residues 279 to 294 constitute a propeptide, removed in mature form; sequence GTLNRIFSAKRKLARA.

This sequence belongs to the nuclease type I family. Monomer. Zn(2+) is required as a cofactor. Requires Mn(2+) as cofactor.

It carries out the reaction Endonucleolytic cleavage to 5'-phosphomononucleotide and 5'-phosphooligonucleotide end-products.. Functionally, endonuclease that can use RNA and single-stranded DNA as substrates. In contradiction with PubMed:23620482, cannot hydrolyze single-stranded DNA and does not cleave mismatches. The polypeptide is Endonuclease 3 (Arabidopsis thaliana (Mouse-ear cress)).